The chain runs to 1692 residues: Adenylate cyclase (1692 aa).

Disordered stretches follow at residues 1 to 22 and 103 to 142; these read MDQSKRLLKSAVPNPPEHFKTG and SLSDTGRTKSDTALAARESSEKSEVPRDTRSAGIKPYKEN. A compositionally biased stretch (basic and acidic residues) spans 120–132; that stretch reads ESSEKSEVPRDTR. The tract at residues 174-195 is required for interaction with gpa2; it reads FTNLTFPEPISDDSDSVEFQRD. Residues 292–380 form the Ras-associating domain; sequence KEFFLRVYRD…SDEEINEEDN (89 aa). 21 LRR repeats span residues 430 to 450, 454 to 474, 477 to 498, 503 to 524, 526 to 547, 549 to 570, 572 to 594, 596 to 617, 618 to 639, 660 to 681, 684 to 705, 707 to 729, 730 to 751, 753 to 774, 783 to 805, 807 to 827, 831 to 852, 855 to 876, 878 to 899, 901 to 922, and 930 to 951; these read ELISLNVSHNLSLDLPLDFME, KLKRLDISNNLRSPRGKPITA, QLEVLNMSRNDIYELDPLIFSG, SLKELNIANNKLFFLPHSTRYL, NLTYLDLSYNNFVTFPLIITEL, QLETLNFSHNLLSQISSKIGSL, KLKHLYLQFNDLSNRLPQEIGLL, NLETIDLSYNAITNIASLSECP, KLNSINVACNLLSFYEYSNPSA, NLVYFDISHAKLIGLKDSVIET, NVETVKVNYNHFTSISDAISAM, NLKYLSCTNCEMSYVSPNLGKLK, HLVHLDLHANNIKIFPEEVWQV, SLKVVNLSSNILEKIKLPVATS, QLKIMRTLSGNPVSSLSSQEFVM, TVEELYLVDNRLGNDCFTALE, CLKVLNLSYNYLTEIPSKFFQN, DLKHLFVSGNELANLSISSTAQ, LLETLYANGNRLSSFPKNEALS, SLRFLDISTNNLQNLAVEKAEK, and QLEYLNLSGNTWFRFSEHEDTN. The PPM-type phosphatase domain occupies 995–1275; that stretch reads RYGVCGYLSR…KNVLVVIVEL (281 aa). The Guanylate cyclase domain maps to 1332–1469; the sequence is AMVFTDIKNS…PVVNRTSRVV (138 aa). Residues Asp-1337 and Asp-1380 each coordinate Mg(2+). Residues Asp-1337 and Asp-1380 each contribute to the Mn(2+) site. Positions 1585–1597 are enriched in basic and acidic residues; the sequence is SDSKSVHGEEGGS. The interval 1585-1614 is disordered; sequence SDSKSVHGEEGGSGKRSVSSLRNVSPSEST. Residues 1600–1614 are compositionally biased toward polar residues; the sequence is RSVSSLRNVSPSEST.

This sequence belongs to the adenylyl cyclase class-3 family. Interacts (via N-terminus) with gpa2; the interaction is direct and serves to activate adenylate cyclase and cAMP-PKA signaling, to repress sexual development and gluconeogenesis. Interacts with git1. The cofactor is Mn(2+).

It is found in the cytoplasm. The catalysed reaction is ATP = 3',5'-cyclic AMP + diphosphate. Activated by binding G protein gpa2. Activated by git1. In contrast to yeast cyclase, S.pombe cyclase is not likely to be regulated by RAS proteins. Functionally, acts in glucose-induced cAMP signaling by catalyzing the synthesis of the second messenger, cAMP to activate PKA signaling and repress sexual development and gluconeogenesis. The polypeptide is Adenylate cyclase (Schizosaccharomyces pombe (strain 972 / ATCC 24843) (Fission yeast)).